We begin with the raw amino-acid sequence, 442 residues long: CBL-interacting serine/threonine-protein kinase 14 (442 aa).

In terms of domain architecture, Protein kinase spans 22-276 (YEVGKLVGCG…IEEIIHDPWF (255 aa)). Residues 28 to 36 (VGCGAFAKV) and Lys-51 contribute to the ATP site. Asp-144 serves as the catalytic Proton acceptor. Residues 162-191 (DFGLSALTDQIRPDGLLHTLCGTPAYVAPE) are activation loop. Ser-166 carries the phosphoserine modification. Phosphothreonine is present on Thr-180. The region spanning 305–329 (MGARRMNAFDIISGSPGFNLSGLFG) is the NAF domain. A PPI region spans residues 335 to 365 (DRVERFVSAWTAERVVERLEEIVSAENLTVA).

Belongs to the protein kinase superfamily. CAMK Ser/Thr protein kinase family. SNF1 subfamily. Interacts with CBL2. Interacts with CBL3. Interacts with CBL8. Interacts with CBL9. Interacts with KIN10 and KIN11. Requires Mn(2+) as cofactor. As to expression, predominant in roots, cauline leaves, and flowers. Ubiquitous with highest expression in 7-day-old seedlings and flower buds, followed by that in cauline leaves and young siliques.

The protein localises to the cytoplasm. The protein resides in the nucleus. It catalyses the reaction L-seryl-[protein] + ATP = O-phospho-L-seryl-[protein] + ADP + H(+). The catalysed reaction is L-threonyl-[protein] + ATP = O-phospho-L-threonyl-[protein] + ADP + H(+). Its function is as follows. CIPK serine-threonine protein kinases interact with CBL proteins. Binding of a CBL protein to the regulatory NAF domain of CIPK protein lead to the activation of the kinase in a calcium-dependent manner. In Arabidopsis thaliana (Mouse-ear cress), this protein is CBL-interacting serine/threonine-protein kinase 14 (CIPK14).